Consider the following 59-residue polypeptide: uncharacterized protein (59 aa).

The chain crosses the membrane as a helical span at residues 7-24 (FLLVFIILAQLLSCTPSA).

The protein resides in the membrane. This is an uncharacterized protein from Rickettsia prowazekii (strain Madrid E).